Reading from the N-terminus, the 157-residue chain is Frd operon probable iron-sulfur subunit A (157 aa).

4Fe-4S ferredoxin-type domains are found at residues Lys24 to Lys55, Asp56 to Arg85, and Phe100 to Arg133. The [4Fe-4S] cluster site is built by Cys34, Cys37, Cys42, Cys46, Cys65, Cys68, Cys71, Cys75, Cys107, Cys110, Cys119, and Cys123.

In Proteus vulgaris, this protein is Frd operon probable iron-sulfur subunit A.